Consider the following 416-residue polypeptide: 3-phosphoshikimate 1-carboxyvinyltransferase (416 aa).

3 residues coordinate 3-phosphoshikimate: Lys20, Ser21, and Arg25. Phosphoenolpyruvate is bound at residue Lys20. Residues Gly88 and Arg116 each contribute to the phosphoenolpyruvate site. 3-phosphoshikimate is bound by residues Ser159, Ser160, Gln161, Ser186, Asp300, and Lys327. Residue Gln161 participates in phosphoenolpyruvate binding. Asp300 acts as the Proton acceptor in catalysis. Residues Arg331 and Arg373 each coordinate phosphoenolpyruvate.

The protein belongs to the EPSP synthase family. In terms of assembly, monomer.

The protein localises to the cytoplasm. It carries out the reaction 3-phosphoshikimate + phosphoenolpyruvate = 5-O-(1-carboxyvinyl)-3-phosphoshikimate + phosphate. Its pathway is metabolic intermediate biosynthesis; chorismate biosynthesis. Functionally, catalyzes the transfer of the enolpyruvyl moiety of phosphoenolpyruvate (PEP) to the 5-hydroxyl of shikimate-3-phosphate (S3P) to produce enolpyruvyl shikimate-3-phosphate and inorganic phosphate. The polypeptide is 3-phosphoshikimate 1-carboxyvinyltransferase (Archaeoglobus fulgidus (strain ATCC 49558 / DSM 4304 / JCM 9628 / NBRC 100126 / VC-16)).